The chain runs to 447 residues: GTPase Der (447 aa).

2 EngA-type G domains span residues 4–165 and 180–357; these read QIIT…PEEE and LQIV…KIWN. Residues 10 to 17, 57 to 61, 119 to 122, 186 to 193, 233 to 237, and 298 to 301 each bind GTP; these read GRPNVGKS, DTPGL, NKCE, GRPNAGKS, DTAGL, and NKWD. The KH-like domain maps to 358 to 443; sequence KKITTSKLNE…PIRFIYVKTK (86 aa).

Belongs to the TRAFAC class TrmE-Era-EngA-EngB-Septin-like GTPase superfamily. EngA (Der) GTPase family. Associates with the 50S ribosomal subunit.

Functionally, GTPase that plays an essential role in the late steps of ribosome biogenesis. This chain is GTPase Der, found in Rickettsia africae (strain ESF-5).